The following is a 362-amino-acid chain: MLCVNVELQERRYPILIGSGLLQDERSYPIKRGDRVMIVTNPTVAQFYLDTVIYALEKRGCVVDHVLLPDGEKYKTLESLNLIFTALLQDNHGRDTTIIALGGGVIGDVAGFVAASYQRGVRLIQMPTTLLSQVDSSVGGKTAVNHELGKNMIGAFYQPSMVIIDTLTLNTLPKREVNAGLAEVIKYGAILDYEFFEWLEQHIDELVALHPEALQHCISRCCQIKADVVARDETEKGDRALLNLGHTFGHAIETHLGYGNWLHGEAVSTGMMMAAVLSEELGDISIADVSRLEKLLARANLPTVSPDTMQPEDYLPHMMRDKKVLSGKLRLVLLKSLGQAYVANDTDHTLVLNAIRRCTQTD.

Residues 70 to 75, 104 to 108, 128 to 129, Lys-141, Lys-150, and 168 to 171 contribute to the NAD(+) site; these read DGEKYK, GVIGD, TT, and TLNT. Positions 183, 246, and 263 each coordinate Zn(2+).

Belongs to the sugar phosphate cyclases superfamily. Dehydroquinate synthase family. It depends on Co(2+) as a cofactor. Zn(2+) is required as a cofactor. Requires NAD(+) as cofactor.

It localises to the cytoplasm. It catalyses the reaction 7-phospho-2-dehydro-3-deoxy-D-arabino-heptonate = 3-dehydroquinate + phosphate. It participates in metabolic intermediate biosynthesis; chorismate biosynthesis; chorismate from D-erythrose 4-phosphate and phosphoenolpyruvate: step 2/7. Its function is as follows. Catalyzes the conversion of 3-deoxy-D-arabino-heptulosonate 7-phosphate (DAHP) to dehydroquinate (DHQ). This is 3-dehydroquinate synthase from Haemophilus influenzae (strain 86-028NP).